A 653-amino-acid polypeptide reads, in one-letter code: Epithelial sodium channel subunit gamma (653 aa).

Over 1-55 (MAPGEKIKAKIKKNLPVKGPQAPTIKELMRWYCLNTNTHGCRRIVVSPGRLRRLL) the chain is Cytoplasmic. Residues 56 to 76 (WIAFTLTAVGLIFWQCALLVF) form a helical membrane-spanning segment. The Extracellular segment spans residues 77–538 (SFYTVSVSIK…EMLLSNFGGQ (462 aa)). 8 disulfides stabilise this stretch: cysteine 100-cysteine 287, cysteine 211-cysteine 218, cysteine 264-cysteine 271, cysteine 376-cysteine 461, cysteine 398-cysteine 457, cysteine 402-cysteine 453, cysteine 411-cysteine 438, and cysteine 413-cysteine 427. A gating release of inhibition by proteolysis (GRIP); protease-sensitive region that is responsible for the proteolytic activation of the channel region spans residues 137 to 225 (RKQRDTESWS…SDCATYTFSS (89 aa)). An N-linked (GlcNAc...) asparagine glycan is attached at asparagine 213. An N-linked (GlcNAc...) asparagine glycan is attached at asparagine 275. Asparagine 501 carries N-linked (GlcNAc...) asparagine glycosylation. Residues 539-559 (LGLWMSCSVVCVIEIIEVFFI) traverse the membrane as a helical segment. Over 560 to 653 (DSLSIVTRRQ…LADTRLPDEP (94 aa)) the chain is Cytoplasmic. Residues 582-632 (AAPSAEAPSGAQGQENPALEIDDDLPTFTSALSLPPAPGAQVPGTPPPRYN) form a disordered region. Residues 627-631 (PPPRY) carry the PY motif; recruits WW domain-containing proteins and is thereby required for ubiquitination and inhibition of the channel by NEDD4 and NEDD4L motif.

It belongs to the amiloride-sensitive sodium channel (TC 1.A.6) family. SCNN1G subfamily. In terms of assembly, component of the heterotrimeric epithelial sodium channel (ENaC) composed of an alpha/SCNN1A, a beta/SCNN1B and a gamma/SCNN1G subunit. Interacts with WWP1 (via WW domains). Interacts with WWP2 (via WW domains); inhibits the channel. Interacts with the full-length immature form of PCSK9 (pro-PCSK9); inhibits ENaC by promoting its proteasomal degradation. Interacts with BPIFA1; the interaction is indirect via SCNN1B and inhibits the proteolytic maturation of SCNN1A and SCNN1G and the activation of ENaC. Post-translationally, phosphorylated on serine and threonine residues. Aldosterone and insulin increase the basal level of phosphorylation. Ubiquitinated. Can be ubiquitinated at multiple sites and undergo monoubiquitination and polyubiquitination. Ubiquitination by NEDD4 or NEDD4L inhibits the ENaC channel through endocytosis, intracellular retention and degradation of its individual subunits. In terms of processing, ENaC is activated through the proteolytic maturation of its subunits. Furin cleaves the SCNN1G subunit first, followed by cleavage by prostasin (PRSS8), which results in a stepwise increase in the open probability of the channel due to the release of an inhibitory tract. BPIFA1, which is recruited by the SCNN1B subunit, prevents the proteolytic activation of ENaC. Post-translationally, N-glycosylated. N-linked glycans are processed to complex type during ENaC complex assembly and transport to the plasma membrane.

It localises to the apical cell membrane. It carries out the reaction Na(+)(in) = Na(+)(out). With respect to regulation, originally identified and characterized by its inhibition by the diuretic drug amiloride. In terms of biological role, this is one of the three pore-forming subunits of the heterotrimeric epithelial sodium channel (ENaC), a critical regulator of sodium balance and fluid homeostasis. ENaC operates in epithelial tissues, where it mediates the electrodiffusion of sodium ions from extracellular fluid through the apical membrane of cells, with water following osmotically. It plays a key role in maintaining sodium homeostasis through electrogenic sodium reabsorption in the kidneys. Additionally, ENaC is essential for airway surface liquid homeostasis, which is crucial for proper mucus clearance. The chain is Epithelial sodium channel subunit gamma from Oryctolagus cuniculus (Rabbit).